The primary structure comprises 435 residues: Glutamate-1-semialdehyde 2,1-aminomutase (435 aa).

Lysine 266 bears the N6-(pyridoxal phosphate)lysine mark.

The protein belongs to the class-III pyridoxal-phosphate-dependent aminotransferase family. HemL subfamily. Homodimer. Pyridoxal 5'-phosphate serves as cofactor.

The protein resides in the cytoplasm. The catalysed reaction is (S)-4-amino-5-oxopentanoate = 5-aminolevulinate. It functions in the pathway porphyrin-containing compound metabolism; protoporphyrin-IX biosynthesis; 5-aminolevulinate from L-glutamyl-tRNA(Glu): step 2/2. This is Glutamate-1-semialdehyde 2,1-aminomutase from Coxiella burnetii (strain CbuK_Q154) (Coxiella burnetii (strain Q154)).